The following is a 145-amino-acid chain: D-aminoacyl-tRNA deacylase (145 aa).

Positions 137-138 (GP) match the Gly-cisPro motif, important for rejection of L-amino acids motif.

Belongs to the DTD family. In terms of assembly, homodimer.

It is found in the cytoplasm. It carries out the reaction glycyl-tRNA(Ala) + H2O = tRNA(Ala) + glycine + H(+). The catalysed reaction is a D-aminoacyl-tRNA + H2O = a tRNA + a D-alpha-amino acid + H(+). In terms of biological role, an aminoacyl-tRNA editing enzyme that deacylates mischarged D-aminoacyl-tRNAs. Also deacylates mischarged glycyl-tRNA(Ala), protecting cells against glycine mischarging by AlaRS. Acts via tRNA-based rather than protein-based catalysis; rejects L-amino acids rather than detecting D-amino acids in the active site. By recycling D-aminoacyl-tRNA to D-amino acids and free tRNA molecules, this enzyme counteracts the toxicity associated with the formation of D-aminoacyl-tRNA entities in vivo and helps enforce protein L-homochirality. This is D-aminoacyl-tRNA deacylase from Salmonella paratyphi A (strain AKU_12601).